We begin with the raw amino-acid sequence, 204 residues long: Holliday junction branch migration complex subunit RuvA (204 aa).

The interval 1 to 67 is domain I; that stretch reads MIAFLSGHLV…ETELVLYGFG (67 aa). A domain II region spans residues 68–146; it reads SPAERDLFVE…HWRQGMGVAD (79 aa). Residues 147-157 form a flexible linker region; it reads QPLAGGPPMPI. Positions 157–204 are domain III; that stretch reads IREEVEMALLALGYSTQEIQAALQALPTHPRPTEDWLRDAITYLSQQP.

Belongs to the RuvA family. Homotetramer. Forms an RuvA(8)-RuvB(12)-Holliday junction (HJ) complex. HJ DNA is sandwiched between 2 RuvA tetramers; dsDNA enters through RuvA and exits via RuvB. An RuvB hexamer assembles on each DNA strand where it exits the tetramer. Each RuvB hexamer is contacted by two RuvA subunits (via domain III) on 2 adjacent RuvB subunits; this complex drives branch migration. In the full resolvosome a probable DNA-RuvA(4)-RuvB(12)-RuvC(2) complex forms which resolves the HJ.

It localises to the cytoplasm. In terms of biological role, the RuvA-RuvB-RuvC complex processes Holliday junction (HJ) DNA during genetic recombination and DNA repair, while the RuvA-RuvB complex plays an important role in the rescue of blocked DNA replication forks via replication fork reversal (RFR). RuvA specifically binds to HJ cruciform DNA, conferring on it an open structure. The RuvB hexamer acts as an ATP-dependent pump, pulling dsDNA into and through the RuvAB complex. HJ branch migration allows RuvC to scan DNA until it finds its consensus sequence, where it cleaves and resolves the cruciform DNA. The polypeptide is Holliday junction branch migration complex subunit RuvA (Synechococcus sp. (strain JA-2-3B'a(2-13)) (Cyanobacteria bacterium Yellowstone B-Prime)).